The chain runs to 167 residues: Iron-sulfur cluster assembly protein 1 (167 aa).

Residues 1–50 (MMLKQAAKKALGLTSRQSTPWSVGILRTYHENVIDHYDNPRNVGSFDKND) constitute a mitochondrion transit peptide.

The protein belongs to the NifU family. As to quaternary structure, component of the core Fe-S cluster (ISC) assembly machinery. Interacts with HSCB. [2Fe-2S] cluster is required as a cofactor. Expressed in roots, stems, leaves, flowers, pollen and siliques.

The protein resides in the mitochondrion matrix. It localises to the cytoplasm. The protein localises to the cytosol. It functions in the pathway cofactor biosynthesis; iron-sulfur cluster biosynthesis. In terms of biological role, scaffold protein for the de novo synthesis of iron-sulfur (Fe-S) clusters within mitochondria, which is required for maturation of both mitochondrial and cytoplasmic [2Fe-2S] and [4Fe-4S] proteins. First, a [2Fe-2S] cluster is transiently assembled on the scaffold protein ISCU (ISU1, ISU2 or ISU3). In a second step, the cluster is released from ISCU, transferred to a glutaredoxin, followed by the formation of mitochondrial [2Fe-2S] proteins, the synthesis of [4Fe-4S] clusters and their target-specific insertion into the recipient apoproteins. Cluster assembly on ISCU depends on the function of the cysteine desulfurase complex NFS1-ISD11, which serves as the sulfur donor for cluster synthesis, the iron-binding protein frataxin as the putative iron donor, and the electron transfer chain comprised of ferredoxin reductase and ferredoxin, which receive their electrons from NADH. This is Iron-sulfur cluster assembly protein 1 (ISU1) from Arabidopsis thaliana (Mouse-ear cress).